The primary structure comprises 544 residues: Chaperonin GroEL 1 (544 aa).

ATP-binding positions include threonine 30–proline 33, lysine 51, aspartate 87–threonine 91, glycine 415, aspartate 481–leucine 483, and aspartate 497.

Belongs to the chaperonin (HSP60) family. In terms of assembly, forms a cylinder of 14 subunits composed of two heptameric rings stacked back-to-back. Interacts with the co-chaperonin GroES.

It localises to the cytoplasm. It catalyses the reaction ATP + H2O + a folded polypeptide = ADP + phosphate + an unfolded polypeptide.. In terms of biological role, together with its co-chaperonin GroES, plays an essential role in assisting protein folding. The GroEL-GroES system forms a nano-cage that allows encapsulation of the non-native substrate proteins and provides a physical environment optimized to promote and accelerate protein folding. The chain is Chaperonin GroEL 1 from Chlamydia caviae (strain ATCC VR-813 / DSM 19441 / 03DC25 / GPIC) (Chlamydophila caviae).